The sequence spans 196 residues: dTTP/UTP pyrophosphatase (196 aa).

D76 (proton acceptor) is an active-site residue.

This sequence belongs to the Maf family. YhdE subfamily. The cofactor is a divalent metal cation.

The protein localises to the cytoplasm. It carries out the reaction dTTP + H2O = dTMP + diphosphate + H(+). The catalysed reaction is UTP + H2O = UMP + diphosphate + H(+). Nucleoside triphosphate pyrophosphatase that hydrolyzes dTTP and UTP. May have a dual role in cell division arrest and in preventing the incorporation of modified nucleotides into cellular nucleic acids. The protein is dTTP/UTP pyrophosphatase of Chlorobium chlorochromatii (strain CaD3).